A 442-amino-acid chain; its full sequence is UDP-N-acetylmuramoylalanine--D-glutamate ligase (442 aa).

109–115 (GSNGKTT) is an ATP binding site.

It belongs to the MurCDEF family.

It is found in the cytoplasm. It carries out the reaction UDP-N-acetyl-alpha-D-muramoyl-L-alanine + D-glutamate + ATP = UDP-N-acetyl-alpha-D-muramoyl-L-alanyl-D-glutamate + ADP + phosphate + H(+). It functions in the pathway cell wall biogenesis; peptidoglycan biosynthesis. Cell wall formation. Catalyzes the addition of glutamate to the nucleotide precursor UDP-N-acetylmuramoyl-L-alanine (UMA). This is UDP-N-acetylmuramoylalanine--D-glutamate ligase from Solibacter usitatus (strain Ellin6076).